The primary structure comprises 5762 residues: MGAPSACRTLVLALAAMLVVPQAETQGPVEPSWENAGHTMDGGAPTSSPTRRVSFVPPVTVFPSLSPLNPAHNGRVCSTWGDFHYKTFDGDVFRFPGLCNYVFSEHCRAAYEDFNVQLRRGLVGSRPVVTRVVIKAQGLVLEASNGSVLINGQREELPYSRTGLLVEQSGDYIKVSIRLVLTFLWNGEDSALLELDPKYANQTCGLCGDFNGLPAFNEFYAHNARLTPLQFGNLQKLDGPTEQCPDPLPLPAGNCTDEEGICHRTLLGPAFAECHALVDSTAYLAACAQDLCRCPTCPCATFVEYSRQCAHAGGQPRNWRCPELCPRTCPLNMQHQECGSPCTDTCSNPQRAQLCEDHCVDGCFCPPGTVLDDITHSGCLPLGQCPCTHGGRTYSPGTSFNTTCSSCTCSGGLWQCQDLPCPGTCSVQGGAHISTYDEKLYDLHGDCSYVLSKKCADSSFTVLAELRKCGLTDNENCLKAVTLSLDGGDTAIRVQADGGVFLNSIYTQLPLSAANITLFTPSSFFIVVQTGLGLQLLVQLVPLMQVFVRLDPAHQGQMCGLCGNFNQNQADDFTALSGVVEATGAAFANTWKAQAACANARNSFEDPCSLSVENENYARHWCSRLTDPNSAFSRCHSIINPKPFHSNCMFDTCNCERSEDCLCAALSSYVHACAAKGVQLSDWRDGVCTKYMQNCPKSQRYAYVVDACQPTCRGLSEADVTCSVSFVPVDGCTCPAGTFLNDAGACVPAQECPCYAHGTVLAPGEVVHDEGAVCSCTGGKLSCLGASLQKSTGCAAPMVYLDCSNSSAGTPGAECLRSCHTLDVGCFSTHCVSGCVCPPGLVSDGSGGCIAEEDCPCVHNEATYKPGETIRVDCNTCTCRNRRWECSHRLCLGTCVAYGDGHFITFDGDRYSFEGSCEYILAQDYCGDNTTHGTFRIVTENIPCGTTGTTCSKAIKLFVESYELILQEGTFKAVARGPGGDPPYKIRYMGIFLVIETHGMAVSWDRKTSVFIRLHQDYKGRVCGLCGNFDDNAINDFATRSRSVVGDALEFGNSWKLSPSCPDALAPKDPCTANPFRKSWAQKQCSILHGPTFAACRSQVDSTKYYEACVNDACACDSGGDCECFCTAVAAYAQACHDAGLCVSWRTPDTCPLFCDFYNPHGGCEWHYQPCGAPCLKTCRNPSGHCLVDLPGLEGCYPKCPPSQPFFNEDQMKCVAQCGCYDKDGNYYDVGARVPTAENCQSCNCTPSGIQCAHSLEACTCTYEDRTYSYQDVIYNTTDGLGACLIAICGSNGTIIRKAVACPGTPATTPFTFTTAWVPHSTTSPALPVSTVCVREVCRWSSWYNGHRPEPGLGGGDFETFENLRQRGYQVCPVLADIECRAAQLPDMPLEELGQQVDCDRMRGLMCANSQQSPPLCHDYELRVLCCEYVPCGPSPAPGTSPQPSLSASTEPAVPTPTQTTATEKTTLWVTPSIRSTAALTSQTGSSSGPVTVTPSAPGTTTCQPRCQWTEWFDEDYPKSEQLGGDVESYDKIRAAGGHLCQQPKDIECQAESFPNWTLAQVGQKVHCDVHFGLVCRNWEQEGVFKMCYNYRIRVLCCSDDHCRGRATTPPPTTELETATTTTTQALFSTPQPTSSPGLTRAPPASTTAVPTLSEGLTSPRYTSTLGTATTGGPTTPAGSTEPTVPGVATSTLPTRSALPGTTGSLGTWRPSQPPTLAPTTMATSRARPTGTASTASKEPLTTSLAPTLTSELSTSQAETSTPRTETTMSPLTNTTTSQGTTRCQPKCEWTEWFDVDFPTSGVAGGDMETFENIRAAGGKMCWAPKSIECRAENYPEVSIDQVGQVLTCSLETGLTCKNEDQTGRFNMCFNYNVRVLCCDDYSHCPSTPATSSTATPSSTPGTTWILTKPTTTATTTASTGSTATPTSTLRTAPPPKVLTTTATTPTVTSSKATPSSSPGTATALPALRSTATTPTATSVTPIPSSSLGTTWTRLSQTTTPTATMSTATPSSTPETAHTSTVLTATATTTGATGSVATPSSTPGTAHTTKVPTTTTTGFTATPSSSPGTALTPPVWISTTTTPTTRGSTVTPSSIPGTTHTATVLTTTTTTVATGSMATPSSSTQTSGTPPSLTTTATTITATGSTTNPSSTPGTTPIPPVLTTTATTPAATSNTVTPSSALGTTHTPPVPNTMATTHGRSLPPSSPHTVRTAWTSATSGILGTTHITEPSTVTSHTLAATTGTTQHSTPALSSPHPSSRTTESPPSPGTTTPGHTTATSRTTATATPSKTRTSTLLPSSPTSAPITTVVTMGCEPQCAWSEWLDYSYPMPGPSGGDFDTYSNIRAAGGAVCEQPLGLECRAQAQPGVPLRELGQVVECSLDFGLVCRNREQVGKFKMCFNYEIRVFCCNYGHCPSTPATSSTAMPSSTPGTTWILTELTTTATTTESTGSTATPSSTPGTTWILTEPSTTATVTVPTGSTATASSTQATAGTPHVSTTATTPTVTSSKATPFSSPGTATALPALRSTATTPTATSFTAIPSSSLGTTWTRLSQTTTPTATMSTATPSSTPETVHTSTVLTTTATTTGATGSVATPSSTPGTAHTTKVLTTTTTGFTATPSSSPGTARTLPVWISTTTTPTTRGSTVTPSSIPGTTHTPTVLTTTTTTVATGSMATPSSSTQTSGTPPSLTTTATTITATGSTTNPSSTPGTTPIPPVLTTTATTPAATSSTVTPSSALGTTHTPPVPNTTATTHGRSLSPSSPHTVRTAWTSATSGTLGTTHITEPSTGTSHTPAATTGTTQHSTPALSSPHPSSRTTESPPSPGTTTPGHTRATSRTTATATPSKTRTSTLLPSSPTSAPITTVVTMGCEPQCAWSEWLDYSYPMPGPSGGDFDTYSNIRAAGGAVCEQPLGLECRAQAQPGVPLRELGQVVECSLDFGLVCRNREQVGKFKMCFNYEIRVFCCNYGHCPSTPATSSTATPSSTPGTTWILTEQTTAATTTATTGSTAIPSSTPGTAPPPKVLTSTATTPTATSSKATSSSSPRTATTLPVLTSTATKSTATSFTPIPSFTLGTTGTLPEQTTTPMATMSTIHPSSTPETTHTSTVLTTKATTTRATSSMSTPSSTPGTTWILTELTTAATTTAATGPTATPSSTPGTTWILTEPSTTATVTVPTGSTATASSTRATAGTLKVLTSTATTPTVISSRATPSSSPGTATALPALRSTATTPTATSVTAIPSSSLGTAWTRLSQTTTPTATMSTATPSSTPETVHTSTVLTTTTTTTRATGSVATPSSTPGTAHTTKVPTTTTTGFTATPSSSPGTALTPPVWISTTTTPTTRGSTVTPSSIPGTTHTATVLTTTTTTVATGSMATPSSSTQTSGTPPSLTTTATTITATGSTTNPSSTPGTTPIPPVLTTTATTPAATSSTVTPSSALGTTHTPPVPNTTATTHGRSLPPSSPHTVRTAWTSATSGILGTTHITEPSTVTSHTPAATTSTTQHSTPALSSPHPSSRTTESPPSPGTTTPGHTRGTSRTTATATPSKTRTSTLLPSSPTSAPITTVVTTGCEPQCAWSEWLDYSYPMPGPSGGDFDTYSNIRAAGGAVCEQPLGLECRAQAQPGVPLRELGQVVECSLDFGLVCRNREQVGKFKMCFNYEIRVFCCNYGHCPSTPATSSTATPSSTPGTTWILTKLTTTATTTESTGSTATPSSTPGTTWILTEPSTTATVTVPTGSTATASSTQATAGTPHVSTTATTPTVTSSKATPFSSPGTATALPALRSTATTPTATSFTAIPSSSLGTTWTRLSQTTTPTATMSTATPSSTPETAHTSTVLTTTATTTRATGSVATPSSTPGTAHTTKVPTTTTTGFTVTPSSSPGTARTPPVWISTTTTPTTSGSTVTPSSVPGTTHTPTVLTTTTTTVATGSMATPSSSTQTSGTPPSLITTATTITATGSTTNPSSTPGTTPIPPVLTTTATTPAATSSTVTPSSALGTTHTPPVPNTTATTHGRSLSPSSPHTVRTAWTSATSGTLGTTHITEPSTGTSHTPAATTGTTQHSTPALSSPHPSSRTTESPPSPGTTTPGHTTATSRTTATATPSKTRTSTLLPSSPTSAPITTVVTTGCEPQCAWSEWLDYSYPMPGPSGGDFDTYSNIRAAGGAVCEQPLGLECRAQAQPGVPLGELGQVVECSLDFGLVCRNREQVGKFKMCFNYEIRVFCCNYGHCPSTPATSSTAMPSSTPGTTWILTELTTTATTTASTGSTATPSSTPGTAPPPKVLTSPATTPTATSSKATSSSSPRTATTLPVLTSTATKSTATSVTPIPSSTLGTTGTLPEQTTTPVATMSTIHPSSTPETTHTSTVLTTKATTTRATSSTSTPSSTPGTTWILTELTTAATTTAATGPTATPSSTPGTTWILTELTTTATTTASTGSTATPSSTPGTTWILTEPSTTATVTVPTGSTATASSTQATAGTPHVSTTATTPTVTSSKATPSSSPGTATALPALRSTATTPTATSFTAIPSSSLGTTWTRLSQTTTPTATMSTATPSSTPETVHTSTVLTATATTTGATGSVATPSSTPGTAHTTKVPTTTTTGFTATPSSSPGTALTPPVWISTTTTPTTTTPTTSGSTVTPSSIPGTTHTARVLTTTTTTVATGSMATPSSSTQTSGTPPSLTTTATTITATGSTTNPSSTPGTTPITPVLTSTATTPAATSSKATSSSSPRTATTLPVLTSTATKSTATSFTPIPSSTLWTTWTVPAQTTTPMSTMSTIHTSSTPETTHTSTVLTTTATMTRATNSTATPSSTLGTTRILTELTTTATTTAATGSTATLSSTPGTTWILTEPSTIATVMVPTGSTATASSTLGTAHTPKVVTTMATMPTATASTVPSSSTVGTTRTPAVLPSSLPTFSVSTVSSSVLTTLRPTGFPSSHFSTPCFCRAFGQFFSPGEVIYNKTDRAGCHFYAVCNQHCDIDRFQGACPTSPPPVSSAPLSSPSPAPGCDNAIPLRQVNETWTLENCTVARCVGDNRVVLLDPKPVANVTCVNKHLPIKVSDPSQPCDFHYECECICSMWGGSHYSTFDGTSYTFRGNCTYVLMREIHARFGNLSLYLDNHYCTASATAAAARCPRALSIHYKSMDIVLTVTMVHGKEEGLILFDQIPVSSGFSKNGVLVSVLGTTTMRVDIPALGVSVTFNGQVFQARLPYSLFHNNTEGQCGTCTNNQRDDCLQRDGTTAASCKDMAKTWLVPDSRKDGCWAPTGTPPTASPAAPVSSTPTPTPCPPQPLCDLMLSQVFAECHNLVPPGPFFNACISDHCRGRLEVPCQSLEAYAELCRARGVCSDWRGATGGLCDLTCPPTKVYKPCGPIQPATCNSRNQSPQLEGMAEGCFCPEDQILFNAHMGICVQACPCVGPDGFPKFPGERWVSNCQSCVCDEGSVSVQCKPLPCDAQGQPPPCNRPGFVTVTRPRAENPCCPETVCVCNTTTCPQSLPVCPPGQESICTQEEGDCCPTFRCRPQLCSYNGTFYGVGATFPGALPCHMCTCLSGDTQDPTVQCQEDACNNTTCPQGFEYKRVAGQCCGECVQTACLTPDGQPVQLNETWVNSHVDNCTVYLCEAEGGVHLLTPQPASCPDVSSCRGSLRKTGCCYSCEEDSCQVRINTTILWHQGCETEVNITFCEGSCPGASKYSAEAQAMQHQCTCCQERRVHEETVPLHCPNGSAILHTYTHVDECGCTPFCVPAPMAPPHTRGFPAQEATAV.

An N-terminal signal peptide occupies residues 1–25; it reads MGAPSACRTLVLALAAMLVVPQAET. The tract at residues 27-50 is disordered; the sequence is GPVEPSWENAGHTMDGGAPTSSPT. In terms of domain architecture, VWFD 1 spans 75 to 245; that stretch reads RVCSTWGDFH…KLDGPTEQCP (171 aa). Intrachain disulfides connect C77/C207 and C99/C244. A glycan (N-linked (GlcNAc...) asparagine) is linked at N145. E194 lines the Cu(2+) pocket. N-linked (GlcNAc...) asparagine glycans are attached at residues N201 and N254. Cu(2+) contacts are provided by H311 and H358. A TIL 1 domain is found at 329 to 385; the sequence is CPLNMQHQECGSPCTDTCSNPQRAQLCEDHCVDGCFCPPGTVLDDITHSGCLPLGQC. N401 is a glycosylation site (N-linked (GlcNAc...) asparagine). A VWFD 2 domain is found at 423-598; it reads GTCSVQGGAH…NTWKAQAACA (176 aa). 3 disulfides stabilise this stretch: C425-C562, C447-C597, and C469-C477. An N-linked (GlcNAc...) asparagine glycan is attached at N515. 2 TIL domains span residues 695–752 and 805–855; these read CPKS…AQEC and NSSA…EEDC. N805 carries an N-linked (GlcNAc...) asparagine glycan. The region spanning 855 to 927 is the VWFC 1 domain; it reads CPCVHNEATY…EYILAQDYCG (73 aa). The region spanning 893 to 1062 is the VWFD 3 domain; the sequence is GTCVAYGDGH…NSWKLSPSCP (170 aa). Disulfide bonds link C895-C1026, C917-C1061, C926-C1023, and C944-C951. N929 carries an N-linked (GlcNAc...) asparagine glycan. 2 N-linked (GlcNAc...) asparagine glycosylation sites follow: N1276 and N1292. The Cys-rich subdomain 1 repeat unit spans residues 1333–1432; sequence CVREVCRWSS…RVLCCEYVPC (100 aa). Residues 1333-4228 are 7 X Cys-rich subdomain repeats; that stretch reads CVREVCRWSS…RVFCCNYGHC (2896 aa). W1340 is a glycosylation site (C-linked (Man) tryptophan). Disordered stretches follow at residues 1437 to 1462 and 1480 to 1502; these read APGT…QTTA and LTSQ…GTTT. The segment covering 1450-1462 has biased composition (low complexity); sequence TEPAVPTPTQTTA. Residues 1503-1604 form a Cys-rich subdomain 2 repeat; the sequence is CQPRCQWTEW…VLCCSDDHCR (102 aa). A glycan (C-linked (Man) tryptophan) is linked at W1509. Residue N1556 is glycosylated (N-linked (GlcNAc...) asparagine). Residues 1607–1783 are disordered; sequence ATTPPPTTEL…NTTTSQGTTR (177 aa). The segment covering 1614-1624 has biased composition (low complexity); that stretch reads TELETATTTTT. 2 stretches are compositionally biased toward polar residues: residues 1625–1638 and 1645–1662; these read QALF…SSPG and ASTT…SPRY. The segment covering 1663–1684 has biased composition (low complexity); the sequence is TSTLGTATTGGPTTPAGSTEPT. The span at 1689–1706 shows a compositional bias: polar residues; the sequence is ATSTLPTRSALPGTTGSL. 2 stretches are compositionally biased toward low complexity: residues 1739 to 1756 and 1765 to 1777; these read EPLT…LSTS and TETT…NTTT. An N-linked (GlcNAc...) asparagine glycan is attached at N1774. One copy of the Cys-rich subdomain 3 repeat lies at 1784–1885; sequence CQPKCEWTEW…VLCCDDYSHC (102 aa). A glycan (C-linked (Man) tryptophan) is linked at W1790. The segment covering 1890 to 1987 has biased composition (low complexity); it reads ATSSTATPSS…TSVTPIPSSS (98 aa). Disordered regions lie at residues 1890–2019, 2031–2100, 2114–2211, and 2242–2302; these read ATSS…TAHT, GATG…GTTH, TGSM…HTVR, and TGTT…SSPT. The tract at residues 1890–2199 is 11 X approximate tandem repeats, Ser/Thr-rich; the sequence is ATSSTATPSS…VPNTMATTHG (310 aa). Over residues 1988–1997 the composition is skewed to polar residues; the sequence is LGTTWTRLSQ. Positions 1998-2019 are enriched in low complexity; the sequence is TTTPTATMSTATPSSTPETAHT. Low complexity predominate over residues 2114–2181; sequence TGSMATPSSS…TSNTVTPSSA (68 aa). Positions 2182-2199 are enriched in polar residues; it reads LGTTHTPPVPNTMATTHG. A Cys-rich subdomain 4 repeat occupies 2313–2414; it reads GCEPQCAWSE…RVFCCNYGHC (102 aa). Residue W2320 is glycosylated (C-linked (Man) tryptophan). The 11 X approximate tandem repeats, Ser/Thr-rich stretch occupies residues 2419–2756; it reads ATSSTAMPSS…VPNTTATTHG (338 aa). Disordered stretches follow at residues 2443-2462, 2473-2522, and 2556-2861; these read ATTT…PGTT, TVTV…ATAL, and TTPT…PTSA. Residues 2556–2738 are compositionally biased toward low complexity; that stretch reads TTPTATMSTA…TSSTVTPSSA (183 aa). Over residues 2739–2786 the composition is skewed to polar residues; sequence LGTTHTPPVPNTTATTHGRSLSPSSPHTVRTAWTSATSGTLGTTHITE. A glycan (N-linked (GlcNAc...) asparagine) is linked at N2749. A compositionally biased stretch (low complexity) spans 2787 to 2861; sequence PSTGTSHTPA…TLLPSSPTSA (75 aa). The HAT 1 repeat unit spans residues 2854 to 2886; the sequence is LPSSPTSAPITTVVTMGCEPQCAWSEWLDYSYP. A Cys-rich subdomain 5 repeat occupies 2871–2971; the sequence is CEPQCAWSEW…RVFCCNYGHC (101 aa). The C-linked (Man) tryptophan glycan is linked to W2877. Positions 2976–3456 are 17 X approximate tandem repeats, Ser/Thr-rich; it reads ATSSTATPSS…VPNTTATTHG (481 aa). Composition is skewed to low complexity over residues 3001 to 3017 and 3026 to 3049; these read TTTA…STPG and TSTA…RTAT. 4 disordered regions span residues 3001–3049, 3256–3357, 3371–3469, and 3481–3561; these read TTTA…RTAT, TTPT…GTTH, TGSM…TVRT, and TTHI…PTSA. The segment covering 3371-3438 has biased composition (low complexity); sequence TGSMATPSSS…TSSTVTPSSA (68 aa). Residues 3439 to 3456 are compositionally biased toward polar residues; that stretch reads LGTTHTPPVPNTTATTHG. A glycan (N-linked (GlcNAc...) asparagine) is linked at N3449. Positions 3487–3561 are enriched in low complexity; the sequence is PSTVTSHTPA…TLLPSSPTSA (75 aa). Residues 3554–3586 form an HAT 2 repeat; it reads LPSSPTSAPITTVVTTGCEPQCAWSEWLDYSYP. The Cys-rich subdomain 6 repeat unit spans residues 3571 to 3671; the sequence is CEPQCAWSEW…RVFCCNYGHC (101 aa). W3577 is a glycosylation site (C-linked (Man) tryptophan). Positions 3676–4013 are 11 X approximate tandem repeats, Ser/Thr-rich; it reads ATSSTATPSS…VPNTTATTHG (338 aa). 3 disordered regions span residues 3699–3779, 3813–3917, and 3956–4118; these read TATT…ATAL, TTPT…HTPT, and ATGS…PTSA. The span at 3956-3995 shows a compositional bias: low complexity; sequence ATGSTTNPSSTPGTTPIPPVLTTTATTPAATSSTVTPSSA. Polar residues predominate over residues 3996 to 4043; it reads LGTTHTPPVPNTTATTHGRSLSPSSPHTVRTAWTSATSGTLGTTHITE. The N-linked (GlcNAc...) asparagine glycan is linked to N4006. Residues 4044-4118 are compositionally biased toward low complexity; the sequence is PSTGTSHTPA…TLLPSSPTSA (75 aa). An HAT 3 repeat occupies 4111–4143; it reads LPSSPTSAPITTVVTTGCEPQCAWSEWLDYSYP. One copy of the Cys-rich subdomain 7 repeat lies at 4128 to 4228; sequence CEPQCAWSEW…RVFCCNYGHC (101 aa). C-linked (Man) tryptophan glycosylation occurs at W4134. The segment at 4233–4879 is 23 X approximate tandem repeats, Ser/Thr-rich; the sequence is ATSSTAMPSS…TLGTAHTPKV (647 aa). 2 stretches are compositionally biased toward low complexity: residues 4259–4274 and 4283–4389; these read TTAS…STPG and TSPA…PGTT. Disordered stretches follow at residues 4259 to 4389, 4428 to 4447, 4458 to 4527, and 4541 to 4750; these read TTAS…PGTT, ATTT…PGTT, TVTV…AIPS, and TTPT…ATSF. N4804, N4960, N5017, N5024, N5046, N5096, and N5111 each carry an N-linked (GlcNAc...) asparagine glycan. A VWFD 4 domain is found at 5073–5261; that stretch reads CICSMWGGSH…VPDSRKDGCW (189 aa). Cystine bridges form between C5075–C5221, C5097–C5260, and C5121–C5132. N5215 carries an N-linked (GlcNAc...) asparagine glycan. The 73-residue stretch at 5412–5484 folds into the VWFC 2 domain; that stretch reads CPCVGPDGFP…NPCCPETVCV (73 aa). N-linked (GlcNAc...) asparagine glycans are attached at residues N5486, N5526, N5565, N5566, N5602, N5612, N5663, N5677, and N5721. In terms of domain architecture, VWFC 3 spans 5521 to 5587; the sequence is QLCSYNGTFY…VAGQCCGECV (67 aa). 4 disulfides stabilise this stretch: C5653/C5705, C5672/C5719, C5681/C5735, and C5685/C5737. A CTCK domain is found at 5653-5742; that stretch reads CEEDSCQVRI…DECGCTPFCV (90 aa).

In terms of assembly, homomultimer; disulfide-linked. The N- and C-terminus mediate their assembly into higher order structures to form filaments. The CTCK domains of two polypeptides associate in the endoplasmic reticulum to generate intermolecularly disulfide-bonded dimers. These dimers progress to the Golgi apparatus, which is a more acidic environment than the endoplasmic reticulum. Under acidic conditions, the N-termini form non-covalent intermolecular interactions that juxtapose assemblies from different CTCK-linked dimers to produce long, disulfide-linked polymers that remain highly compact until secretion. In terms of processing, highly glycosylated. C-, N- and O-glycosylated. C-mannosylated in the Cys-rich subdomains probably on the first Trp residue of the WXXW motif. Highly O-glycosylated in the Ser/Thr-rich tandem repeat (TR) region. The repeat region is about 59% O-glycosylated with a high abundance of NeuAc(2)Hex(1)HexNac1-ol. Expressed on surface airway epithelia. Expressed mainly in mucous cells of submucosal glands of airway tissues. Highly expressed in the sublingual gland. Also found in submaxillary glands, endocervix, gall bladder, and pancreas.

The protein localises to the secreted. Gel-forming mucin that is thought to contribute to the lubricating and viscoelastic properties of whole saliva and cervical mucus. This chain is Mucin-5B (MUC5B), found in Homo sapiens (Human).